Consider the following 195-residue polypeptide: Probable molybdenum cofactor guanylyltransferase (195 aa).

GTP contacts are provided by residues 8 to 10 (LSG), lysine 20, aspartate 65, and aspartate 96. Aspartate 96 provides a ligand contact to Mg(2+).

Belongs to the MobA family. Requires Mg(2+) as cofactor.

It is found in the cytoplasm. The catalysed reaction is Mo-molybdopterin + GTP + H(+) = Mo-molybdopterin guanine dinucleotide + diphosphate. In terms of biological role, transfers a GMP moiety from GTP to Mo-molybdopterin (Mo-MPT) cofactor (Moco or molybdenum cofactor) to form Mo-molybdopterin guanine dinucleotide (Mo-MGD) cofactor. The chain is Probable molybdenum cofactor guanylyltransferase from Bacillus licheniformis (strain ATCC 14580 / DSM 13 / JCM 2505 / CCUG 7422 / NBRC 12200 / NCIMB 9375 / NCTC 10341 / NRRL NRS-1264 / Gibson 46).